We begin with the raw amino-acid sequence, 204 residues long: Probable nicotinate-nucleotide adenylyltransferase (204 aa).

Belongs to the NadD family.

It carries out the reaction nicotinate beta-D-ribonucleotide + ATP + H(+) = deamido-NAD(+) + diphosphate. It functions in the pathway cofactor biosynthesis; NAD(+) biosynthesis; deamido-NAD(+) from nicotinate D-ribonucleotide: step 1/1. Its function is as follows. Catalyzes the reversible adenylation of nicotinate mononucleotide (NaMN) to nicotinic acid adenine dinucleotide (NaAD). The sequence is that of Probable nicotinate-nucleotide adenylyltransferase from Dehalococcoides mccartyi (strain ATCC BAA-2266 / KCTC 15142 / 195) (Dehalococcoides ethenogenes (strain 195)).